A 255-amino-acid chain; its full sequence is Ribonuclease HII (255 aa).

Residues alanine 72–leucine 255 enclose the RNase H type-2 domain. A divalent metal cation is bound by residues aspartate 78, glutamate 79, and aspartate 170.

Belongs to the RNase HII family. It depends on Mn(2+) as a cofactor. Mg(2+) serves as cofactor.

It is found in the cytoplasm. The enzyme catalyses Endonucleolytic cleavage to 5'-phosphomonoester.. Its function is as follows. Endonuclease that specifically degrades the RNA of RNA-DNA hybrids. This is Ribonuclease HII from Staphylococcus aureus (strain MSSA476).